The following is a 1634-amino-acid chain: MSSTQGNGEHWKSLESVGISRKELAMAEALQMEYDALSRLRHDKEENRAKQNADPSLISWDEPGVDFYSKPAGRRTDLKLLRGLSGSDPTLNYNSLSPQEGPPNHSTSQGPQPGSDPWPKGSLSGDYLYIFDGSDGGVSSSPGPGDIEGSCKKLSPPPLPPRASIWDTPPLPPRKGSPSSSKISQPSDINTFSLVEQLPGKLLEHRILEEEEVLGGGGQGRLLGSVDYDGINDAITRLNLKSTYDAEMLRDATRGWKEGRGPLDFSKDTSGKPVARSKTMPPQVPPRTYASRYGNRKNATPGKNRRISAAPVGSRPHTVANGHELFEVSEERDEEVAAFCHMLDILRSGSDIQDYFLTGYVWSAVTPSPEHLGDEVNLKVTVLCDRLQEALTFTCNCSSTVDLLIYQTLCYTHDDLRNVDVGDFVLKPCGLEEFLQNKHALGSHEYIQYCRKFDIDIRLQLMEQKVVRSDLARTVNDDQSPSTLNYLVHLQERPVKQTISRQALSLLFDTYHNEVDAFLLADGDFPLKADRVVQSVKAICNALAAVETPEITSALNQLPPCPSRMQPKIQKDPSVLAVRENREKVVEALTAAILDLVELYCNTFNADFQTAVPGSRKHDLVQEACHFARSLAFTVYATHRIPIIWATSYEDFYLSCSLSHGGKELCSPLQTRRAHFSKYLFHLIVWDQQICFPVQVNRLPRETLLCATLYALPIPPPGSSSEANKQRRVPEALGWVTTPLFNFRQVLTCGRKLLGLWPATQENPSARWSAPNFHQPDSVILQIDFPTSAFDIKFTSPPGDKFSPRYEFGSLREEDQRKLKDIMQKESLYWLTDADKKRLWEKRYYCHSEVSSLPLVLASAPSWEWACLPDIYVLLKQWTHMNHQDALGLLHATFPDQEVRRMAVQWIGSLSDAELLDYLPQLVQALKYECYLDSPLVRFLLKRAVSDLRVTHYFFWLLKDGLKDSQFSIRYQYLLAALLCCCGKGLREEFNRQCWLVNALAKLAQQVREAAPSARQGILRTGLEEVKQFFALNGSCRLPLSPSLLVKGIVPRDCSYFNSNAVPLKLSFQNVDPLGENIRVIFKCGDDLRQDMLTLQMIRIMSKIWVQEGLDMRMVIFRCFSTGRGRGMVEMIPNAETLRKIQVEHGVTGSFKDRPLADWLQKHNPGEDEYEKAVENFIYSCAGCCVATYVLGICDRHNDNIMLKTTGHMFHIDFGRFLGHAQMFGNIKRDRAPFVFTSDMAYVINGGDKPSSRFHDFVDLCCQAYNLIRKHTHLFLNLLGLMLSCGIPELSDLEDLKYVYDALRPQDTEANATTYFTRLIESSLGSVATKLNFFIHNLAQMKFTGSDDRLTLSFASRTHTLKSSGRISDVFLCRHEKIFHPNKGYIYVVKVMRENTHEATYIQRTFEEFQELHNKLRLLFPSSHLPSFPSRFVIGRSRGEAVAERRREELNGYIWHLIHAPPEVAECDLVYTFFHPLPRDEKAMGTSPAPKSSDGTWARPVGKVGGEVKLSISYKNNKLFIMVMHIRGLQLLQDGNDPDPYVKIYLLPDPQKTTKRKTKVARKTCNPTYNEMLVYDGIPKGDLQQRELQLSVLSEQGFWENVLLGEVNIRLRELDLAQEKTGWFALGSRSHGTL.

The segment at 2–298 is interaction with GRB2; sequence SSTQGNGEHW…YASRYGNRKN (297 aa). Disordered stretches follow at residues 45–188 and 259–315; these read EENR…QPSD and GRGP…VGSR. Positions 87–112 are enriched in polar residues; it reads SDPTLNYNSLSPQEGPPNHSTSQGPQ. Low complexity predominate over residues 176-187; the sequence is GSPSSSKISQPS. Residues 259 to 270 are compositionally biased toward basic and acidic residues; the sequence is GRGPLDFSKDTS. The PI3K-RBD domain maps to 375–463; sequence EVNLKVTVLC…DIDIRLQLME (89 aa). Residues 635 to 786 form the C2 PI3K-type domain; sequence VYATHRIPII…DSVILQIDFP (152 aa). Positions 805 to 981 constitute a PIK helical domain; the sequence is RYEFGSLREE…QYLLAALLCC (177 aa). Residues 1050 to 1328 form the PI3K/PI4K catalytic domain; the sequence is VPRDCSYFNS…LIESSLGSVA (279 aa). The interval 1056–1062 is G-loop; it reads YFNSNAV. The segment at 1192–1200 is catalytic loop; sequence GICDRHNDN. Positions 1211–1237 are activation loop; sequence HIDFGRFLGHAQMFGNIKRDRAPFVFT. The 117-residue stretch at 1365–1481 folds into the PX domain; the sequence is GRISDVFLCR…TFFHPLPRDE (117 aa). Positions 1504–1624 constitute a C2 domain; the sequence is VGGEVKLSIS…DLAQEKTGWF (121 aa).

It belongs to the PI3/PI4-kinase family. Part of a complex with ERBB2 and EGFR. Part of a complex with phosphorylated EGFR and GRB2. Interacts with phosphorylated EGFR and PDGFR, maybe indirectly. Interacts with GRB2. Ca(2+) is required as a cofactor. Mg(2+) serves as cofactor. Requires Mn(2+) as cofactor. As to expression, expressed in columnar and transitional epithelia, mononuclear cells, and ganglion cells (at protein level). Widely expressed, with highest levels in thymus and placenta and lowest in peripheral blood, skeletal muscle and kidney.

The protein localises to the microsome. The protein resides in the cell membrane. Its subcellular location is the cytoplasm. It is found in the cytosol. It localises to the nucleus. The protein localises to the endoplasmic reticulum. The enzyme catalyses a 1,2-diacyl-sn-glycero-3-phospho-(1D-myo-inositol 4-phosphate) + ATP = a 1,2-diacyl-sn-glycero-3-phospho-(1D-myo-inositol-3,4-bisphosphate) + ADP + H(+). It carries out the reaction a 1,2-diacyl-sn-glycero-3-phospho-(1D-myo-inositol) + ATP = a 1,2-diacyl-sn-glycero-3-phospho-(1D-myo-inositol-3-phosphate) + ADP + H(+). With respect to regulation, activated by GRB2. Phosphorylates PtdIns and PtdIns4P with a preference for PtdIns. Does not phosphorylate PtdIns(4,5)P2. May be involved in EGF and PDGF signaling cascades. This is Phosphatidylinositol 4-phosphate 3-kinase C2 domain-containing subunit beta (PIK3C2B) from Homo sapiens (Human).